A 686-amino-acid chain; its full sequence is L-type lectin-domain containing receptor kinase VII.1 (686 aa).

Positions 1-20 (MKALLFLLTLFLILPNPISA) are cleaved as a signal peptide. Residues 21 to 256 (IDFIFNGFND…SHKILAWSFS (236 aa)) are legume-lectin like. Residues 21–286 (IDFIFNGFND…PKDSIVKAKW (266 aa)) lie on the Extracellular side of the membrane. N-linked (GlcNAc...) asparagine glycosylation is found at Asn29, Asn34, Asn52, Asn64, Asn111, Asn123, Asn168, Asn203, Asn224, and Asn259. The helical transmembrane segment at 287 to 307 (FVFVLVLICFLVVALVGLVLF) threads the bilayer. Topologically, residues 308-686 (AVVRKRLERA…SWNSSILEGR (379 aa)) are cytoplasmic. The Protein kinase domain occupies 347–628 (FDEKNVIGIG…VFEGDKAEIF (282 aa)). ATP is bound by residues 353 to 361 (IGIGGNGKV) and Lys376. Asp475 functions as the Proton acceptor in the catalytic mechanism.

The protein in the C-terminal section; belongs to the protein kinase superfamily. Ser/Thr protein kinase family. This sequence in the N-terminal section; belongs to the leguminous lectin family.

The protein resides in the cell membrane. It catalyses the reaction L-seryl-[protein] + ATP = O-phospho-L-seryl-[protein] + ADP + H(+). The enzyme catalyses L-threonyl-[protein] + ATP = O-phospho-L-threonyl-[protein] + ADP + H(+). The protein is L-type lectin-domain containing receptor kinase VII.1 (LECRK71) of Arabidopsis thaliana (Mouse-ear cress).